Reading from the N-terminus, the 142-residue chain is Large ribosomal subunit protein uL13 (142 aa).

The protein belongs to the universal ribosomal protein uL13 family. As to quaternary structure, part of the 50S ribosomal subunit.

This protein is one of the early assembly proteins of the 50S ribosomal subunit, although it is not seen to bind rRNA by itself. It is important during the early stages of 50S assembly. The protein is Large ribosomal subunit protein uL13 of Chromohalobacter salexigens (strain ATCC BAA-138 / DSM 3043 / CIP 106854 / NCIMB 13768 / 1H11).